The following is a 43-amino-acid chain: Methionine aminopeptidase (43 aa).

This sequence belongs to the peptidase M24A family. Methionine aminopeptidase type 1 subfamily. Monomer. Requires Co(2+) as cofactor. Zn(2+) is required as a cofactor. Mn(2+) serves as cofactor. The cofactor is Fe(2+).

It catalyses the reaction Release of N-terminal amino acids, preferentially methionine, from peptides and arylamides.. Removes the N-terminal methionine from nascent proteins. The N-terminal methionine is often cleaved when the second residue in the primary sequence is small and uncharged (Met-Ala-, Cys, Gly, Pro, Ser, Thr, or Val). Requires deformylation of the N(alpha)-formylated initiator methionine before it can be hydrolyzed. The polypeptide is Methionine aminopeptidase (map) (Klebsiella oxytoca).